A 530-amino-acid chain; its full sequence is Light-independent protochlorophyllide reductase subunit B (530 aa).

Asp-36 contacts [4Fe-4S] cluster. The active-site Proton donor is Asp-290. 425–426 is a substrate binding site; the sequence is GL.

Belongs to the ChlB/BchB/BchZ family. As to quaternary structure, protochlorophyllide reductase is composed of three subunits; ChlL, ChlN and ChlB. Forms a heterotetramer of two ChlB and two ChlN subunits. [4Fe-4S] cluster is required as a cofactor.

The enzyme catalyses chlorophyllide a + oxidized 2[4Fe-4S]-[ferredoxin] + 2 ADP + 2 phosphate = protochlorophyllide a + reduced 2[4Fe-4S]-[ferredoxin] + 2 ATP + 2 H2O. The protein operates within porphyrin-containing compound metabolism; chlorophyll biosynthesis (light-independent). In terms of biological role, component of the dark-operative protochlorophyllide reductase (DPOR) that uses Mg-ATP and reduced ferredoxin to reduce ring D of protochlorophyllide (Pchlide) to form chlorophyllide a (Chlide). This reaction is light-independent. The NB-protein (ChlN-ChlB) is the catalytic component of the complex. The protein is Light-independent protochlorophyllide reductase subunit B of Synechococcus sp. (strain WH7803).